A 91-amino-acid chain; its full sequence is Defensin-like protein 269 (91 aa).

An N-terminal signal peptide occupies residues 1 to 25 (MAVSKTTMLIVLVAIILSCVSISNA). 4 disulfides stabilise this stretch: Cys-41–Cys-82, Cys-53–Cys-72, Cys-59–Cys-77, and Cys-63–Cys-79.

It belongs to the DEFL family.

Its subcellular location is the secreted. This is Defensin-like protein 269 from Arabidopsis thaliana (Mouse-ear cress).